A 317-amino-acid chain; its full sequence is Aspartate carbamoyltransferase catalytic subunit (317 aa).

Residues R55 and T56 each coordinate carbamoyl phosphate. L-aspartate is bound at residue K83. Residues R105, H138, and Q141 each contribute to the carbamoyl phosphate site. L-aspartate-binding residues include R171 and R225. Residues G266 and P267 each contribute to the carbamoyl phosphate site.

This sequence belongs to the aspartate/ornithine carbamoyltransferase superfamily. ATCase family. Heterododecamer (2C3:3R2) of six catalytic PyrB chains organized as two trimers (C3), and six regulatory PyrI chains organized as three dimers (R2).

It carries out the reaction carbamoyl phosphate + L-aspartate = N-carbamoyl-L-aspartate + phosphate + H(+). It functions in the pathway pyrimidine metabolism; UMP biosynthesis via de novo pathway; (S)-dihydroorotate from bicarbonate: step 2/3. In terms of biological role, catalyzes the condensation of carbamoyl phosphate and aspartate to form carbamoyl aspartate and inorganic phosphate, the committed step in the de novo pyrimidine nucleotide biosynthesis pathway. In Mycobacteroides abscessus (strain ATCC 19977 / DSM 44196 / CCUG 20993 / CIP 104536 / JCM 13569 / NCTC 13031 / TMC 1543 / L948) (Mycobacterium abscessus), this protein is Aspartate carbamoyltransferase catalytic subunit.